The chain runs to 582 residues: Protein LYRIC (582 aa).

Residues 1–48 are Lumenal-facing; it reads MAARSWQDELAQQAEEGSARLREMLSVGLGFLRTELGLDLGLEPKRYP. The interval 1–71 is activation of NF-kappa-B; that stretch reads MAARSWQDEL…LLLFLLGYGW (71 aa). Residues 49–69 form a helical membrane-spanning segment; the sequence is GWVILVGTGALGLLLLFLLGY. At 70–582 the chain is on the cytoplasmic side; sequence GWAAACAGAR…KKKKKARRET (513 aa). The interval 72–169 is interaction with BCCIP; the sequence is AAACAGARKK…EKSKKNKKKS (98 aa). Residues 78-222 form a disordered region; it reads ARKKRRSPPR…DSGSLDSTIP (145 aa). The span at 93 to 106 shows a compositional bias: low complexity; sequence AAVPAAAPDDLALL. An interaction with RELA region spans residues 101–205; sequence DDLALLKNLR…ISHREKRQQR (105 aa). Over residues 109-127 the composition is skewed to basic and acidic residues; the sequence is LRSEEQKKKNRKKLSEKPK. Thr-143 bears the Phosphothreonine mark. Positions 160-169 are enriched in basic residues; the sequence is EKSKKNKKKS. Ser-180 is subject to Phosphoserine. Positions 198–208 are enriched in basic residues; that stretch reads HREKRQQRKRD. Phosphoserine is present on residues Ser-216 and Ser-251. Residue Lys-264 is modified to N6-acetyllysine. Positions 280–582 are disordered; that stretch reads TVNGGGWNEK…KKKKKARRET (303 aa). Ser-298, Ser-306, Ser-308, Ser-311, Ser-323, Ser-339, Ser-344, and Ser-369 each carry phosphoserine. Polar residues predominate over residues 320–333; sequence SAWSQDTGDANTNG. Composition is skewed to polar residues over residues 354-372 and 383-394; these read EPVS…SRNQ and NGLSSADPNSDW. The interval 381–443 is lung-homing for mammary tumors; it reads GLNGLSSADP…EGALPTGKSK (63 aa). Phosphoserine occurs at positions 415 and 426. Residues 421-434 show a composition bias toward basic and acidic residues; sequence DDQKVSDDDKEKGE. The span at 441–451 shows a compositional bias: basic residues; that stretch reads KSKKKKKKKKK. At Ser-457 the chain carries Phosphoserine. Phosphothreonine is present on Thr-458. A phosphoserine mark is found at Ser-478, Ser-494, and Ser-496. 2 stretches are compositionally biased toward polar residues: residues 504 to 520 and 549 to 568; these read KNSQ…STEP and NTKQ…SWES. Ser-568 carries the post-translational modification Phosphoserine. Over residues 571 to 582 the composition is skewed to basic residues; that stretch reads QIKKKKKARRET.

Interacts with BCCIP, CREBBP/CBP and RELA/p65. Widely expressed with highest levels in muscle-dominating organs such as skeletal muscle, heart, tongue and small intestine and in endocrine glands such as thyroid and adrenal gland. Overexpressed in various cancers including breast, brain, prostate, melanoma and glioblastoma multiforme.

Its subcellular location is the endoplasmic reticulum membrane. The protein resides in the nucleus membrane. The protein localises to the cell junction. It is found in the tight junction. It localises to the nucleus. Its subcellular location is the nucleolus. The protein resides in the cytoplasm. The protein localises to the perinuclear region. Down-regulates SLC1A2/EAAT2 promoter activity when expressed ectopically. Activates the nuclear factor kappa-B (NF-kappa-B) transcription factor. Promotes anchorage-independent growth of immortalized melanocytes and astrocytes which is a key component in tumor cell expansion. Promotes lung metastasis and also has an effect on bone and brain metastasis, possibly by enhancing the seeding of tumor cells to the target organ endothelium. Induces chemoresistance. This Homo sapiens (Human) protein is Protein LYRIC (MTDH).